A 770-amino-acid polypeptide reads, in one-letter code: Signal transducer and activator of transcription 3 (770 aa).

At A2 the chain carries N-acetylalanine. Residues K49 and K87 each carry the N6-acetyllysine modification. Positions D150–M162 match the Essential for nuclear import motif. Residues W580–L670 form the SH2 domain. 3 positions are modified to allysine; alternate: K601, K615, and K631. 3 positions are modified to N6-acetyllysine; alternate: K601, K615, and K631. Y640 is subject to Phosphotyrosine; by TYK2. K685 is subject to Allysine; alternate. The residue at position 685 (K685) is an N6-acetyllysine; alternate. P704 carries the phosphotyrosine modification. Y705 is subject to Phosphotyrosine; by FER and PTK6. The residue at position 707 (K707) is an N6-acetyllysine. T714 carries the phosphothreonine modification. Position 727 is a phosphoserine; by DYRK2, NLK, NEK6, IRAK1, RPS6KA5, ZIPK/DAPK3 and PKC/PRKCE (S727).

The protein belongs to the transcription factor STAT family. In terms of assembly, forms a homodimer or a heterodimer with a related family member (at least STAT1). Component of a promoter-binding complex composed of STAT3, NFATC3 and NFATC4; complex formation is enhanced by calcineurin. Interacts with IL31RA, NCOA1, PELP1, SIPAR, SOCS7, STATIP1 and TMF1. Interacts with IL23R in presence of IL23. Interacts (via SH2 domain) with NLK. Interacts with ARL2BP; the interaction is enhanced by LIF and JAK1 expression. Interacts with KPNA4 and KPNA5; KPNA4 may be the primary mediator of nuclear import. Interacts with CAV2; the interaction is increased on insulin-induced tyrosine phosphorylation of CAV2 and leads to STAT3 activation. Interacts with ARL2BP; interaction is enhanced with ARL2. Interacts with NEK6. Binds to CDK9 when activated and nuclear. Interacts with BMX. Interacts with ZIPK/DAPK3. Interacts with PIAS3; the interaction occurs on stimulation by IL6, CNTF or OSM and inhibits the DNA binding activity of STAT3. In prostate cancer cells, interacts with PRKCE and promotes DNA binding activity of STAT3. Interacts with STMN3, antagonizing its microtubule-destabilizing activity. Interacts with the 'Lys-129' acetylated form of BIRC5/survivin. Interacts with FER. Interacts (via SH2 domain) with EIF2AK2/PKR (via the kinase catalytic domain). Interacts with INPP5F; the interaction is independent of STAT3 Tyr-705 phosphorylation status. Interacts with FGFR4. Interacts with OCIAD1. Interacts with OCIAD2. Interacts (unphosphorylated or phosphorylated at Ser-727) with PHB1. Interacts and may form heterodimers with NHLH1. Found in a complex with SLC39A6, SLC39A10 and with the 'Ser-727' phosphorylated form of STAT3 throughout mitosis. Interacts (when phosphorylated at Tyr-705) with CD274/PD-L1; promoting nuclear translocation of CD274/PD-L1. Interacts (when acetylated) with EP300 (via bromo domain); interaction takes place following STAT3 acetylation by EP300 and promotes enhanceosome assembly. Interacts (when acetylated) with BRD2 (via bromo domain); interaction promotes STAT3 recruitment to chromatin and T-helper Th17 cell differentiation. Interacts with FAM220A/SIPAR; the interaction occurs in both the nucleus and the cytoplasm, is enhanced by IL6 and promotes STAT3 dephosphorylation. Interacts in both unphosphorylated and phosphorylated forms with FAM220A but interacts preferentially in the phosphorylated form in the nucleus. Interacts with PTPN2; the interaction is promoted by FAM220A and leads to STAT3 dephosphorylation which negatively regulates STAT3 transcriptional activator activity. As to quaternary structure, (Microbial infection) Interacts with HCV core protein. (Microbial infection) Interacts with S.typhimurium SarA. In terms of assembly, (Microbial infection) Interacts with human cytomegalovirus (HHV-5) immediate early protein IE1; this interaction leads to STAT3 nuclear accumulation and disruption of IL6-induced STAT3 phosphorylation. Tyrosine phosphorylated upon stimulation with EGF. Tyrosine phosphorylated in response to constitutively activated FGFR1, FGFR2, FGFR3 and FGFR4. Activated through tyrosine phosphorylation by BMX. Tyrosine phosphorylated in response to IL6, IL11, LIF, CNTF, KITLG/SCF, CSF1, EGF, PDGF, IFN-alpha, LEP and OSM. Activated KIT promotes phosphorylation on tyrosine residues and subsequent translocation to the nucleus. Phosphorylated on serine upon DNA damage, probably by ATM or ATR. Serine phosphorylation is important for the formation of stable DNA-binding STAT3 homodimers and maximal transcriptional activity. ARL2BP may participate in keeping the phosphorylated state of STAT3 within the nucleus. Upon LPS challenge, phosphorylated within the nucleus by IRAK1. Upon erythropoietin treatment, phosphorylated on Ser-727 by RPS6KA5. Dephosphorylation on tyrosine residues by PTPN2 negatively regulates IL6/interleukin-6 signaling. Phosphorylation at Tyr-705 by PTK6, isoform M2 of PKM (PKM2) or FER leads to an increase of its transcriptional activity. Phosphorylation at Tyr-705 is increased in the presence of calcineurin. Phosphorylation at Tyr-640 by TYK2 negatively regulates transcriptional activity. In terms of processing, acetylated on lysine residues by EP300/p300, promoting its activation. Acetylation at Lys-49 and Lys-87 by EP300/p300 promotes its activation. Acetylation at Lys-87 by EP300/p300 promotes its association with BRD2 and recruitment to chromatin. Deacetylated at Lys-49 and Lys-87 by HDAC1. Acetylation at Lys-685 by EP300/p300 promotes its homodimerization and activation. Deacetylated at Lys-685 by HDAC3. Acetylated on lysine residues by CREBBP. Deacetylation by LOXL3 leads to disrupt STAT3 dimerization and inhibit STAT3 transcription activity. Oxidation of lysine residues to allysine on STAT3 preferentially takes place on lysine residues that are acetylated. Post-translationally, some lysine residues are oxidized to allysine by LOXL3, leading to disrupt STAT3 dimerization and inhibit STAT3 transcription activity. Oxidation of lysine residues to allysine on STAT3 preferentially takes place on lysine residues that are acetylated. (Microbial infection) Phosphorylated on Tyr-705 in the presence of S.typhimurium SarA. In terms of tissue distribution, heart, brain, placenta, lung, liver, skeletal muscle, kidney and pancreas. Expressed in naive CD4(+) T cells as well as T-helper Th17, Th1 and Th2 cells.

It localises to the cytoplasm. It is found in the nucleus. In terms of biological role, signal transducer and transcription activator that mediates cellular responses to interleukins, KITLG/SCF, LEP and other growth factors. Once activated, recruits coactivators, such as NCOA1 or MED1, to the promoter region of the target gene. May mediate cellular responses to activated FGFR1, FGFR2, FGFR3 and FGFR4. Upon activation of IL6ST/gp130 signaling by interleukin-6 (IL6), binds to the IL6-responsive elements identified in the promoters of various acute-phase protein genes. Activated by IL31 through IL31RA. Acts as a regulator of inflammatory response by regulating differentiation of naive CD4(+) T-cells into T-helper Th17 or regulatory T-cells (Treg): acetylation promotes its transcription activity and cell differentiation while deacetylation and oxidation of lysine residues by LOXL3 inhibits differentiation. Involved in cell cycle regulation by inducing the expression of key genes for the progression from G1 to S phase, such as CCND1. Mediates the effects of LEP on melanocortin production, body energy homeostasis and lactation. May play an apoptotic role by transctivating BIRC5 expression under LEP activation. Cytoplasmic STAT3 represses macroautophagy by inhibiting EIF2AK2/PKR activity. Plays a crucial role in basal beta cell functions, such as regulation of insulin secretion. Following JAK/STAT signaling activation and as part of a complex with NFATC3 and NFATC4, binds to the alpha-beta E4 promoter region of CRYAB and activates transcription in cardiomyocytes. This Homo sapiens (Human) protein is Signal transducer and activator of transcription 3.